The chain runs to 42 residues: MRDLKTYLSVAPVLSTLWFGSLAGLLIEINRLFPDALTFPFF.

Residues 7–27 (YLSVAPVLSTLWFGSLAGLLI) form a helical membrane-spanning segment.

Belongs to the PsaJ family.

It is found in the plastid. The protein resides in the chloroplast thylakoid membrane. Its function is as follows. May help in the organization of the PsaE and PsaF subunits. The sequence is that of Photosystem I reaction center subunit IX from Lepidium virginicum (Virginia pepperweed).